The following is a 240-amino-acid chain: tRNA pseudouridine synthase B (240 aa).

Asp-54 acts as the Nucleophile in catalysis.

The protein belongs to the pseudouridine synthase TruB family. Type 1 subfamily.

It carries out the reaction uridine(55) in tRNA = pseudouridine(55) in tRNA. Its function is as follows. Responsible for synthesis of pseudouridine from uracil-55 in the psi GC loop of transfer RNAs. The chain is tRNA pseudouridine synthase B from Chlorobaculum tepidum (strain ATCC 49652 / DSM 12025 / NBRC 103806 / TLS) (Chlorobium tepidum).